The chain runs to 82 residues: MSPKVQALLLLVGLITFLEVHAEEELSETVESERSCAKEYQWCDWNTRPCCDNISCICSWIGTNCECKKGIICTIKDWYKGK.

An N-terminal signal peptide occupies residues 1–22; sequence MSPKVQALLLLVGLITFLEVHA. Residues 23–34 constitute a propeptide that is removed on maturation; it reads EEELSETVESER. 4 disulfide bridges follow: Cys36/Cys51, Cys43/Cys56, Cys50/Cys67, and Cys58/Cys65.

Belongs to the neurotoxin 02 (plectoxin) family. 04 (U16-lycotoxin) subfamily. In terms of tissue distribution, expressed by the venom gland.

Its subcellular location is the secreted. The protein is U16-lycotoxin-Ls1b of Lycosa singoriensis (Wolf spider).